Here is a 424-residue protein sequence, read N- to C-terminus: UDP-N-acetylglucosamine 1-carboxyvinyltransferase (424 aa).

Residue 22-23 coordinates phosphoenolpyruvate; sequence KN. Arginine 93 serves as a coordination point for UDP-N-acetyl-alpha-D-glucosamine. The active-site Proton donor is cysteine 117. Cysteine 117 bears the 2-(S-cysteinyl)pyruvic acid O-phosphothioketal mark. Residues 122–126, aspartate 307, and valine 329 each bind UDP-N-acetyl-alpha-D-glucosamine; that span reads RPIDL.

It belongs to the EPSP synthase family. MurA subfamily.

Its subcellular location is the cytoplasm. The enzyme catalyses phosphoenolpyruvate + UDP-N-acetyl-alpha-D-glucosamine = UDP-N-acetyl-3-O-(1-carboxyvinyl)-alpha-D-glucosamine + phosphate. It participates in cell wall biogenesis; peptidoglycan biosynthesis. In terms of biological role, cell wall formation. Adds enolpyruvyl to UDP-N-acetylglucosamine. This chain is UDP-N-acetylglucosamine 1-carboxyvinyltransferase, found in Pelodictyon phaeoclathratiforme (strain DSM 5477 / BU-1).